The sequence spans 600 residues: CoA ligase FVEG_12633 (600 aa).

Residues 170 to 174, H214, 321 to 323, and 342 to 343 each bind ATP; these read TSGTT, AAL, and ER. The interval 241–342 is SBD1; that stretch reads NSVWTRLAAP…QLTGGNVLLE (102 aa). The tract at residues 343 to 420 is SBD2; it reads RYGMTEVGMA…LRGPTVFTGY (78 aa). M346 is a binding site for substrate. The ATP site is built by T347, D441, R471, and K564. K564 provides a ligand contact to oxalate.

Belongs to the ATP-dependent AMP-binding enzyme family.

In terms of biological role, coA ligase; part of the Fusarium detoxification of benzoxazolinone cluster 2 (FDB2) involved in the degradation of benzoxazolinones produced by the host plant. Maize, wheat, and rye produce the 2 benzoxazinone phytoanticipins 2,4-dihy-droxy-7-methoxy-1,4-benzoxazin-3-one (DIMBOA) and 2,4-dihydroxy-1,4-benzoxazin-3-one (DIBOA) that, due to their inherent instability once released, spontaneously degrade to the more stable corresponding benzoxazolinones, 6-methoxy-2-benzoxazolinone (MBOA) and 2-benzoxazolinone (BOA), respectively. The first step in the detoxification of benzoxazolinones involves the hydrolysis of the cyclic ester bond of benzoxazolinones by the FDB1 cluster gamma-lactamase MBL1 to aminophenols. MBL1 is able to convert BOA into 2-aminophenol (2-AP), as well as MBOA into 5-methoxy-2-aminophenol (2-AMP). The FDB2 cluster N-malonyltransferase FDB2/NAT1 then metabolizes aminophenols via N-malonylation to non-toxic malonamic acids. FDB2/NAT1 converts 2-AP into N-(2-hydroxyphenyl) malonamic acid (HPMA) and 2-AMP into N-(2-hydroxy-4-methoxyphenyl) malonamic acid (HMPMA). The duplicated dienlactone hydrolases DLH1 and DLH2 may provide redundant function for hydrolyzing the lactone moiety in the BOA molecule. The roles of the amidases an other enzymes encoded by the 2 FDB clusters have not been identified so far. The chain is CoA ligase FVEG_12633 from Gibberella moniliformis (strain M3125 / FGSC 7600) (Maize ear and stalk rot fungus).